Here is a 389-residue protein sequence, read N- to C-terminus: bZIP transcription factor 68 (389 aa).

Over residues 1-16 (MGSSEMEKSGKEKEPK) the composition is skewed to basic and acidic residues. 5 disordered regions span residues 1-42 (MGSS…VSAG), 124-154 (MAEA…KRSK), 170-236 (AGKN…NLPV), 285-318 (QPWL…RKQA), and 356-389 (SSLK…QDVA). A compositionally biased stretch (low complexity) spans 19–32 (PPSTSSSAPATVVS). Residues 137–149 (GDGKPSDGKEKLP) are compositionally biased toward basic and acidic residues. Lysine 154 participates in a covalent cross-link: Glycyl lysine isopeptide (Lys-Gly) (interchain with G-Cter in ubiquitin). The span at 170-205 (AGKNSGASANGACSKSAESGSDGSSDGSDANSQNDS) shows a compositional bias: low complexity. 2 stretches are compositionally biased toward basic and acidic residues: residues 206–215 (GSRHNGKDGE) and 304–318 (SNRE…RKQA). The region spanning 295-358 (EIKRQRRKQS…EELLAENSSL (64 aa)) is the bZIP domain. The tract at residues 297–316 (KRQRRKQSNRESARRSRLRK) is basic motif. Positions 323–358 (LAQRAEVLNGENSSLRAEINKLKSQYEELLAENSSL) are leucine-zipper. Polar residues predominate over residues 356–366 (SSLKNKFSSAP). Residues 372–389 (DLDKNEQEPQRSTRQDVA) are compositionally biased toward basic and acidic residues.

This sequence belongs to the bZIP family. In terms of assembly, monomer, homodimer and heterodimers with GBF1/BZIP41, GBF2/BZIP54 and GBF3/BZIP55. Heterodimers with BZIP16. Interacts with GIP1.

It localises to the nucleus. Its function is as follows. Transcriptional activator that binds to the G-box motif (5'-CACGTG-3') and other cis-acting elements with 5'-ACGT-3' core, such as Hex, C-box and as-1 motifs. Possesses high binding affinity to G-box, much lower affinity to Hex and C-box, and little affinity to as-1 element. G-box and G-box-like motifs are cis-acting elements defined in promoters of certain plant genes which are regulated by such diverse stimuli as light-induction or hormone control. Binds to the G-box motif 5'-CACGTG-3' of LHCB2.4 (At3g27690) promoter. May act as transcriptional activator in light-regulated expression of LHCB2.4. Probably binds DNA as monomer. DNA-binding activity is redox-dependent. This is bZIP transcription factor 68 from Arabidopsis thaliana (Mouse-ear cress).